The chain runs to 140 residues: UPF0336 protein TW736 (140 aa).

Belongs to the UPF0336 family.

The protein is UPF0336 protein TW736 of Tropheryma whipplei (strain TW08/27) (Whipple's bacillus).